The following is a 162-amino-acid chain: Large ribosomal subunit protein bL17 (162 aa).

The disordered stretch occupies residues 126–162; the sequence is ATAKKATRTRRSKKSAAATEAPAAPAAETTEEAPKAE. The span at 130 to 139 shows a compositional bias: basic residues; that stretch reads KATRTRRSKK. The segment covering 140–153 has biased composition (low complexity); that stretch reads SAAATEAPAAPAAE.

This sequence belongs to the bacterial ribosomal protein bL17 family. As to quaternary structure, part of the 50S ribosomal subunit. Contacts protein L32.

This is Large ribosomal subunit protein bL17 from Phocaeicola vulgatus (strain ATCC 8482 / DSM 1447 / JCM 5826 / CCUG 4940 / NBRC 14291 / NCTC 11154) (Bacteroides vulgatus).